Reading from the N-terminus, the 292-residue chain is MQKYEKLEKIGEGTYGTVFKAKNRETHEIVALKRVRLDDDDEGVPSSALREICLLKELKHKNIVRLHDVLHSDKKLTLVFEFCDQDLKKYFDSCNGDLDPEIVKSFLFQLLKGLGFCHSRNVLHRDLKPQNLLINRNGELKLADFGLARAFGIPVRCYSAEVVTLWYRPPDVLFGAKLYSTSIDMWSAGCIFAELANAGRPLFPGNDVDDQLKRIFRLLGTPTEEQWPSMTKLPDYKPYPMYPATTSLVNVVPKLNATGRDLLQNLLKCNPVQRISAEEALQHPYFSDFCPP.

The region spanning 4 to 286 (YEKLEKIGEG…AEEALQHPYF (283 aa)) is the Protein kinase domain. ATP-binding positions include 10-18 (IGEGTYGTV) and Lys-33. Tyr-15 bears the Phosphotyrosine; by ABL1, EPHA4 and FYN mark. Phosphothreonine is present on Thr-17. Lys-56 carries the post-translational modification N6-acetyllysine. A Phosphoserine modification is found at Ser-72. Asp-126 acts as the Proton acceptor in catalysis. At Ser-159 the chain carries Phosphoserine.

This sequence belongs to the protein kinase superfamily. CMGC Ser/Thr protein kinase family. CDC2/CDKX subfamily. Heterodimer composed of a catalytic subunit CDK5 and a regulatory subunit CDK5R1 (p25) and macromolecular complex composed of at least CDK5, CDK5R1 (p35) and CDK5RAP1 or CDK5RAP2 or CDK5RAP3. Only the heterodimer shows kinase activity. Under neurotoxic stress and neuronal injury conditions, p35 is cleaved by calpain to generate p25 that hyperactivates CDK5, that becomes functionally disabled and often toxic. Found in a trimolecular complex with CABLES1 and ABL1. Interacts with CABLES1 and CABLES2. Interacts with AATK and GSTP1. Binds to HDAC1 when in complex with p25. Interaction with myristoylation p35 promotes CDK5 association with membranes. Both isoforms 1 and 2 interacts with beta-catenin/CTNNB1. Interacts with delta-catenin/CTNND2 and APEX1. Interacts with P53/TP53 in neurons. Interacts with EPHA4; may mediate the activation of NGEF by EPHA4. Interacts with PTK2/FAK1. The complex p35/CDK5 interacts with CLOCK. Interacts with HTR6. In terms of processing, phosphorylation on Tyr-15 by ABL1 and FYN, and on Ser-159 by casein kinase 1 promotes kinase activity. By contrast, phosphorylation at Thr-14 inhibits activity. Phosphorylation at Ser-159 is essential for maximal catalytic activity. As to expression, ubiquitously expressed. Accumulates in cortical neurons (at protein level). In terms of tissue distribution, expressed in the testis, skeletal muscle, colon, bone marrow and ovary.

The protein localises to the cytoplasm. It localises to the nucleus. Its subcellular location is the cell membrane. It is found in the perikaryon. The protein resides in the cell projection. The protein localises to the lamellipodium. It localises to the growth cone. Its subcellular location is the postsynaptic density. It is found in the synapse. The catalysed reaction is L-seryl-[protein] + ATP = O-phospho-L-seryl-[protein] + ADP + H(+). It catalyses the reaction L-threonyl-[protein] + ATP = O-phospho-L-threonyl-[protein] + ADP + H(+). Its activity is regulated as follows. Inhibited by 2-(1-ethyl-2-hydroxyethylamino)-6-benzylamino-9-isopropylpurine (roscovitine), 1-isopropyl-4-aminobenzyl-6-ether-linked benzimidazoles, resveratrol, AT-7519 and olomoucine. Activated by CDK5R1 (p35) and CDK5R2 (p39) during the development of the nervous system; degradation of CDK5R1 (p35) and CDK5R2 (p39) by proteasome result in down regulation of kinase activity, during this process, CDK5 phosphorylates p35 and induces its ubiquitination and subsequent degradation. Kinase activity is mainly determined by the amount of p35 available and subcellular location; reversible association to plasma membrane inhibits activity. Long-term inactivation as well as CDK5R1 (p25)-mediated hyperactivation of CDK5 triggers cell death. The pro-death activity of hyperactivated CDK5 is suppressed by membrane association of CDK5, via myristoylation of p35. Brain-derived neurotrophic factor, glial-derived neurotrophic factor, nerve growth factor (NGF), retinoic acid, laminin and neuregulin promote activity. Neurotoxicity enhances nuclear activity, thus leading to MEF2 phosphorylation and inhibition prior to apoptosis of cortical neurons. Repression by GSTP1 via p25/p35 translocation prevents neurodegeneration. In terms of biological role, proline-directed serine/threonine-protein kinase essential for neuronal cell cycle arrest and differentiation and may be involved in apoptotic cell death in neuronal diseases by triggering abortive cell cycle re-entry. Interacts with D1 and D3-type G1 cyclins. Phosphorylates SRC, NOS3, VIM/vimentin, p35/CDK5R1, MEF2A, SIPA1L1, SH3GLB1, PXN, PAK1, MCAM/MUC18, SEPT5, SYN1, DNM1, AMPH, SYNJ1, CDK16, RAC1, RHOA, CDC42, TONEBP/NFAT5, MAPT/TAU, MAP1B, histone H1, p53/TP53, HDAC1, APEX1, PTK2/FAK1, huntingtin/HTT, ATM, MAP2, NEFH and NEFM. Regulates several neuronal development and physiological processes including neuronal survival, migration and differentiation, axonal and neurite growth, synaptogenesis, oligodendrocyte differentiation, synaptic plasticity and neurotransmission, by phosphorylating key proteins. Negatively regulates the CACNA1B/CAV2.2 -mediated Ca(2+) release probability at hippocampal neuronal soma and synaptic terminals. Activated by interaction with CDK5R1 (p35) and CDK5R2 (p39), especially in postmitotic neurons, and promotes CDK5R1 (p35) expression in an autostimulation loop. Phosphorylates many downstream substrates such as Rho and Ras family small GTPases (e.g. PAK1, RAC1, RHOA, CDC42) or microtubule-binding proteins (e.g. MAPT/TAU, MAP2, MAP1B), and modulates actin dynamics to regulate neurite growth and/or spine morphogenesis. Also phosphorylates exocytosis associated proteins such as MCAM/MUC18, SEPT5, SYN1, and CDK16/PCTAIRE1 as well as endocytosis associated proteins such as DNM1, AMPH and SYNJ1 at synaptic terminals. In the mature central nervous system (CNS), regulates neurotransmitter movements by phosphorylating substrates associated with neurotransmitter release and synapse plasticity; synaptic vesicle exocytosis, vesicles fusion with the presynaptic membrane, and endocytosis. Promotes cell survival by activating anti-apoptotic proteins BCL2 and STAT3, and negatively regulating of JNK3/MAPK10 activity. Phosphorylation of p53/TP53 in response to genotoxic and oxidative stresses enhances its stabilization by preventing ubiquitin ligase-mediated proteasomal degradation, and induces transactivation of p53/TP53 target genes, thus regulating apoptosis. Phosphorylation of p35/CDK5R1 enhances its stabilization by preventing calpain-mediated proteolysis producing p25/CDK5R1 and avoiding ubiquitin ligase-mediated proteasomal degradation. During aberrant cell-cycle activity and DNA damage, p25/CDK5 activity elicits cell-cycle activity and double-strand DNA breaks that precedes neuronal death by deregulating HDAC1. DNA damage triggered phosphorylation of huntingtin/HTT in nuclei of neurons protects neurons against polyglutamine expansion as well as DNA damage mediated toxicity. Phosphorylation of PXN reduces its interaction with PTK2/FAK1 in matrix-cell focal adhesions (MCFA) during oligodendrocytes (OLs) differentiation. Negative regulator of Wnt/beta-catenin signaling pathway. Activator of the GAIT (IFN-gamma-activated inhibitor of translation) pathway, which suppresses expression of a post-transcriptional regulon of proinflammatory genes in myeloid cells; phosphorylates the linker domain of glutamyl-prolyl tRNA synthetase (EPRS) in a IFN-gamma-dependent manner, the initial event in assembly of the GAIT complex. Phosphorylation of SH3GLB1 is required for autophagy induction in starved neurons. Phosphorylation of TONEBP/NFAT5 in response to osmotic stress mediates its rapid nuclear localization. MEF2 is inactivated by phosphorylation in nucleus in response to neurotoxin, thus leading to neuronal apoptosis. APEX1 AP-endodeoxyribonuclease is repressed by phosphorylation, resulting in accumulation of DNA damage and contributing to neuronal death. NOS3 phosphorylation down regulates NOS3-derived nitrite (NO) levels. SRC phosphorylation mediates its ubiquitin-dependent degradation and thus leads to cytoskeletal reorganization. May regulate endothelial cell migration and angiogenesis via the modulation of lamellipodia formation. Involved in dendritic spine morphogenesis by mediating the EFNA1-EPHA4 signaling. The complex p35/CDK5 participates in the regulation of the circadian clock by modulating the function of CLOCK protein: phosphorylates CLOCK at 'Thr-451' and 'Thr-461' and regulates the transcriptional activity of the CLOCK-BMAL1 heterodimer in association with altered stability and subcellular distribution. The sequence is that of Cyclin-dependent kinase 5 from Homo sapiens (Human).